A 142-amino-acid chain; its full sequence is Large ribosomal subunit protein uL13 (142 aa).

This sequence belongs to the universal ribosomal protein uL13 family. Part of the 50S ribosomal subunit.

This protein is one of the early assembly proteins of the 50S ribosomal subunit, although it is not seen to bind rRNA by itself. It is important during the early stages of 50S assembly. The protein is Large ribosomal subunit protein uL13 of Vibrio cholerae serotype O1 (strain M66-2).